The primary structure comprises 261 residues: Cytochrome c oxidase subunit 3 (261 aa).

Topologically, residues 1–15 are mitochondrial matrix; the sequence is MTHQTHAYHMVNPSP. The helical transmembrane segment at 16-34 threads the bilayer; sequence WPLTGALSALLLTSGLMMW. Topologically, residues 35-40 are mitochondrial intermembrane; that stretch reads FHFNNP. The chain crosses the membrane as a helical span at residues 41–66; it reads TLLVLGLLTNLISSYQWWRDIVREGT. Residues 67-72 lie on the Mitochondrial matrix side of the membrane; it reads YQGHHT. Residues 73–105 traverse the membrane as a helical segment; that stretch reads KVVQKGLRYGMVLFIISEVFFFLGFFWAFYHSS. Residues 106 to 128 lie on the Mitochondrial intermembrane side of the membrane; it reads LAPTPELGGCWPPTGISPLNPLE. The helical transmembrane segment at 129 to 152 threads the bilayer; that stretch reads VPLLNTSILLASGVSITWSHHSLM. Residues 153-155 are Mitochondrial matrix-facing; that stretch reads EGN. The chain crosses the membrane as a helical span at residues 156–183; that stretch reads RKQMIQALMITIALGLYFTALQAMEYYE. The Mitochondrial intermembrane portion of the chain corresponds to 184-190; that stretch reads SSFTISD. The chain crosses the membrane as a helical span at residues 191 to 223; that stretch reads GVYGSTFFVATGFHGLHVIIGTTFLITCLLRQL. The Mitochondrial matrix segment spans residues 224–232; that stretch reads LYHFTSNHH. Residues 233–256 traverse the membrane as a helical segment; sequence FGFEAAAWYWHFVDVVWLFLYVSI. The Mitochondrial intermembrane segment spans residues 257-261; that stretch reads YWWGS.

This sequence belongs to the cytochrome c oxidase subunit 3 family. Component of the cytochrome c oxidase (complex IV, CIV), a multisubunit enzyme composed of 14 subunits. The complex is composed of a catalytic core of 3 subunits MT-CO1, MT-CO2 and MT-CO3, encoded in the mitochondrial DNA, and 11 supernumerary subunits COX4I, COX5A, COX5B, COX6A, COX6B, COX6C, COX7A, COX7B, COX7C, COX8 and NDUFA4, which are encoded in the nuclear genome. The complex exists as a monomer or a dimer and forms supercomplexes (SCs) in the inner mitochondrial membrane with NADH-ubiquinone oxidoreductase (complex I, CI) and ubiquinol-cytochrome c oxidoreductase (cytochrome b-c1 complex, complex III, CIII), resulting in different assemblies (supercomplex SCI(1)III(2)IV(1) and megacomplex MCI(2)III(2)IV(2)).

It localises to the mitochondrion inner membrane. The catalysed reaction is 4 Fe(II)-[cytochrome c] + O2 + 8 H(+)(in) = 4 Fe(III)-[cytochrome c] + 2 H2O + 4 H(+)(out). Its function is as follows. Component of the cytochrome c oxidase, the last enzyme in the mitochondrial electron transport chain which drives oxidative phosphorylation. The respiratory chain contains 3 multisubunit complexes succinate dehydrogenase (complex II, CII), ubiquinol-cytochrome c oxidoreductase (cytochrome b-c1 complex, complex III, CIII) and cytochrome c oxidase (complex IV, CIV), that cooperate to transfer electrons derived from NADH and succinate to molecular oxygen, creating an electrochemical gradient over the inner membrane that drives transmembrane transport and the ATP synthase. Cytochrome c oxidase is the component of the respiratory chain that catalyzes the reduction of oxygen to water. Electrons originating from reduced cytochrome c in the intermembrane space (IMS) are transferred via the dinuclear copper A center (CU(A)) of subunit 2 and heme A of subunit 1 to the active site in subunit 1, a binuclear center (BNC) formed by heme A3 and copper B (CU(B)). The BNC reduces molecular oxygen to 2 water molecules using 4 electrons from cytochrome c in the IMS and 4 protons from the mitochondrial matrix. The sequence is that of Cytochrome c oxidase subunit 3 (MT-CO3) from Tachyglossus aculeatus aculeatus (Southeast Australian short-beaked echidna).